We begin with the raw amino-acid sequence, 117 residues long: Carboxysome shell protein CcmK4 (117 aa).

The region spanning 5–91 is the BMC domain; it reads AVGSLETKGF…PHENVECVLP (87 aa).

Belongs to the bacterial microcompartments protein family. CcmK subfamily. As to quaternary structure, crystallizes as a homohexamer. Interacts stably with CcmK3, forming heterohexamers that can make dodecamers. Heterohexamers have a 1:2 CcmK3:CcmK4 stoichiometry. Upon expression in E.coli forms large aggregates.

It localises to the carboxysome. Its function is as follows. A probably essential, minor shell protein of the carboxysome, a polyhedral inclusion where RuBisCO (ribulose bisphosphate carboxylase, rbcL-rbcS) is sequestered. Hexamers form sheets that form the facets of the polyhedral carboxysome. In PCC 7418 there are several CcmK paralogs with presumably functional differences. This subunit can probably make both homohexamers and heterohexamers with CcmK3. Both hexamers can also make dodecamers, formation depends on buffer conditions. The protein is Carboxysome shell protein CcmK4 of Halothece sp. (strain PCC 7418) (Synechococcus sp. (strain PCC 7418)).